A 163-amino-acid chain; its full sequence is Nucleotide-binding protein PC1_1036 (163 aa).

Belongs to the YajQ family.

In terms of biological role, nucleotide-binding protein. The chain is Nucleotide-binding protein PC1_1036 from Pectobacterium carotovorum subsp. carotovorum (strain PC1).